Reading from the N-terminus, the 296-residue chain is 4-hydroxy-tetrahydrodipicolinate synthase (296 aa).

Pyruvate is bound at residue T49. Y137 (proton donor/acceptor) is an active-site residue. Residue K166 is the Schiff-base intermediate with substrate of the active site. I208 is a pyruvate binding site.

Belongs to the DapA family. In terms of assembly, homotetramer; dimer of dimers.

Its subcellular location is the cytoplasm. The catalysed reaction is L-aspartate 4-semialdehyde + pyruvate = (2S,4S)-4-hydroxy-2,3,4,5-tetrahydrodipicolinate + H2O + H(+). It participates in amino-acid biosynthesis; L-lysine biosynthesis via DAP pathway; (S)-tetrahydrodipicolinate from L-aspartate: step 3/4. Catalyzes the condensation of (S)-aspartate-beta-semialdehyde [(S)-ASA] and pyruvate to 4-hydroxy-tetrahydrodipicolinate (HTPA). This Azobacteroides pseudotrichonymphae genomovar. CFP2 protein is 4-hydroxy-tetrahydrodipicolinate synthase.